The chain runs to 315 residues: Malate dehydrogenase (315 aa).

NAD(+) contacts are provided by residues 10 to 15 (GAGNVG) and aspartate 34. Substrate contacts are provided by arginine 85 and arginine 91. NAD(+)-binding positions include asparagine 98 and 121 to 123 (VSN). Asparagine 123 and arginine 154 together coordinate substrate. Histidine 178 serves as the catalytic Proton acceptor.

The protein belongs to the LDH/MDH superfamily. MDH type 3 family.

It catalyses the reaction (S)-malate + NAD(+) = oxaloacetate + NADH + H(+). Its function is as follows. Catalyzes the reversible oxidation of malate to oxaloacetate. In Rhodopirellula baltica (strain DSM 10527 / NCIMB 13988 / SH1), this protein is Malate dehydrogenase.